The following is a 419-amino-acid chain: L-rhamnose isomerase (419 aa).

Positions 262, 294, and 296 each coordinate Mn(2+).

The protein belongs to the rhamnose isomerase family. In terms of assembly, homotetramer. Requires Mn(2+) as cofactor.

Its subcellular location is the cytoplasm. The enzyme catalyses L-rhamnopyranose = L-rhamnulose. The protein operates within carbohydrate degradation; L-rhamnose degradation; glycerone phosphate from L-rhamnose: step 1/3. Functionally, catalyzes the interconversion of L-rhamnose and L-rhamnulose. In Escherichia coli (strain K12 / MC4100 / BW2952), this protein is L-rhamnose isomerase.